A 134-amino-acid chain; its full sequence is Transcription antitermination protein NusB (134 aa).

It belongs to the NusB family.

Its function is as follows. Involved in transcription antitermination. Required for transcription of ribosomal RNA (rRNA) genes. Binds specifically to the boxA antiterminator sequence of the ribosomal RNA (rrn) operons. This chain is Transcription antitermination protein NusB, found in Halothermothrix orenii (strain H 168 / OCM 544 / DSM 9562).